The primary structure comprises 481 residues: Serralysin B (481 aa).

Residues 1-15 (MQQNEKASLNTSAAA) constitute a propeptide that is removed on maturation. His189 contributes to the Zn(2+) binding site. Residue Glu190 is part of the active site. Zn(2+) contacts are provided by His193 and Tyr230. Residues Arg267, Gly269, Thr271, Asp299, Gly301, Gly302, Asp304, Thr341, Glu343, Gly348, Gly350, Asp352, Asn357, Ala359, Asn361, Gly365, Gly366, Ala367, Gly368, Asp370, Gly374, Gly377, Asp379, Gly383, Gly384, Ala385, Gly386, Asp388, Asp397, Asp404, and Asp414 each contribute to the Ca(2+) site. 3 Hemolysin-type calcium-binding repeats span residues 346 to 363 (IGGS…DNIL), 364 to 381 (QGGA…ADTL), and 382 to 399 (TGGA…QDST).

This sequence belongs to the peptidase M10B family. It depends on Ca(2+) as a cofactor. Zn(2+) is required as a cofactor.

The protein localises to the secreted. It catalyses the reaction Preferential cleavage of bonds with hydrophobic residues in P1'.. The protein is Serralysin B (prtB) of Dickeya chrysanthemi (Pectobacterium chrysanthemi).